Here is a 707-residue protein sequence, read N- to C-terminus: Ribosomal RNA large subunit methyltransferase K/L (707 aa).

Residues 44–155 (VIYNLCLWSR…NDILTVSFDL (112 aa)) form the THUMP domain.

The protein belongs to the methyltransferase superfamily. RlmKL family.

It is found in the cytoplasm. The catalysed reaction is guanosine(2445) in 23S rRNA + S-adenosyl-L-methionine = N(2)-methylguanosine(2445) in 23S rRNA + S-adenosyl-L-homocysteine + H(+). It carries out the reaction guanosine(2069) in 23S rRNA + S-adenosyl-L-methionine = N(2)-methylguanosine(2069) in 23S rRNA + S-adenosyl-L-homocysteine + H(+). In terms of biological role, specifically methylates the guanine in position 2445 (m2G2445) and the guanine in position 2069 (m7G2069) of 23S rRNA. This is Ribosomal RNA large subunit methyltransferase K/L from Legionella pneumophila (strain Paris).